A 476-amino-acid polypeptide reads, in one-letter code: Glycogen synthase (476 aa).

Lysine 15 serves as a coordination point for ADP-alpha-D-glucose.

Belongs to the glycosyltransferase 1 family. Bacterial/plant glycogen synthase subfamily.

The catalysed reaction is [(1-&gt;4)-alpha-D-glucosyl](n) + ADP-alpha-D-glucose = [(1-&gt;4)-alpha-D-glucosyl](n+1) + ADP + H(+). It functions in the pathway glycan biosynthesis; glycogen biosynthesis. In terms of biological role, synthesizes alpha-1,4-glucan chains using ADP-glucose. The polypeptide is Glycogen synthase (Streptococcus mutans serotype c (strain ATCC 700610 / UA159)).